A 404-amino-acid chain; its full sequence is MAAVPELLEQQEEDRSKLRSVSVDLNVDPSLQIDIPDALSERDKVKFTVHTKTTLPTFQSPEFSVTRQHEDFVWLHDTLTETTDYAGLIIPPAPTKPDFDGPREKMQKLGEGEGSMTKEEFAKMKQELEAEYLAVFKKTVSSHEVFLQRLSSHPVLSKDRNFHVFLEYDQDLSVRRKNTKEMFGGFFKSVVKSADEVLFSGVKEVDDFFEQEKNFLINYYNRIKDSCAKADKMTRSHKNVADDYIHTAACLHSLALEEPTVIKKYLLKVAELFEKLRKVEGRVSSDEDLKLTELLRYYMLNIEAAKDLLYRRTKALIDYENSNKALDKARLKSKDVKLAETHQQECCQKFEQLSESAKEELINFKRKRVAAFRKNLIEMSELEIKHARNNVSLLQSCIDLFKNN.

Position 2 is an N-acetylalanine (A2). The PX domain occupies 25-172 (LNVDPSLQID…HVFLEYDQDL (148 aa)). A 1,2-diacyl-sn-glycero-3-phospho-(1D-myo-inositol-4,5-bisphosphate) is bound by residues 40-46 (SERDKVK), 99-105 (FDGPREK), and 113-116 (EGSM). The interval 169–261 (DQDLSVRRKN…HSLALEEPTV (93 aa)) is interaction with DOCK1. Residues 183–200 (FGGFFKSVVKSADEVLFS) form a membrane-binding amphipathic helix region. Position 193 is a phosphoserine (S193). Residues 202–404 (VKEVDDFFEQ…QSCIDLFKNN (203 aa)) form the BAR domain. K275 carries the N6-acetyllysine modification.

Belongs to the sorting nexin family. In terms of assembly, forms heterodimers with BAR domain-containing sorting nexins SNX1 and SNX2; does not homodimerize. The heterodimers are proposed to self-assemble into helical arrays on the membrane to stabilize and expand local membrane curvature underlying endosomal tubule formation. Thought to be a component of the originally described retromer complex (also called SNX-BAR retromer) which is a pentamer containing the heterotrimeric retromer cargo-selective complex (CSC), also described as vacuolar protein sorting subcomplex (VPS), and a heterodimeric membrane-deforming subcomplex formed between SNX1 or SNX2 and SNX5 or SNX6 (also called SNX-BAR subcomplex); the respective CSC and SNX-BAR subcomplexes associate with low affinity. Interacts with SNX1, SNX2, VPS26A, VPS29, VPS35, DCTN1, DOCK1, MIB1, PIP5K1C. Interacts with HGS; increased by PIP5K1C kinase activity and by PtdIns(3P) and/or PtdIns(3,4)P2.

The protein localises to the endosome. It is found in the early endosome. It localises to the early endosome membrane. The protein resides in the cell membrane. Its subcellular location is the cytoplasmic vesicle membrane. The protein localises to the cytoplasm. It is found in the cell projection. It localises to the phagocytic cup. The protein resides in the ruffle. Its function is as follows. Involved in several stages of intracellular trafficking. Interacts with membranes containing phosphatidylinositol lipids. Acts in part as component of the retromer membrane-deforming SNX-BAR subcomplex. The SNX-BAR retromer mediates retrograde transport of cargo proteins from endosomes to the trans-Golgi network (TGN) and is involved in endosome-to-plasma membrane transport for cargo protein recycling. The SNX-BAR subcomplex functions to deform the donor membrane into a tubular profile called endosome-to-TGN transport carrier (ETC). Does not have in vitro vesicle-to-membrane remodeling activity. Involved in retrograde transport of lysosomal enzyme receptor IGF2R. May function as link between endosomal transport vesicles and dynactin. Plays a role in the internalization of EGFR after EGF stimulation. Involved in EGFR endosomal sorting and degradation; the function involves PIP5K1C and is retromer-independent. Together with PIP5K1C facilitates HGS interaction with ubiquitinated EGFR, which initiates EGFR sorting to intraluminal vesicles (ILVs) of the multivesicular body for subsequent lysosomal degradation. Involved in E-cadherin sorting and degradation; inhibits PIP5K1C-mediated E-cadherin degradation. Plays a role in macropinocytosis. In Rattus norvegicus (Rat), this protein is Sorting nexin-5 (Snx5).